Reading from the N-terminus, the 211-residue chain is Uracil phosphoribosyltransferase (211 aa).

Residues arginine 78, arginine 103, and 130–138 (DPMLATGGT) each bind 5-phospho-alpha-D-ribose 1-diphosphate. Uracil contacts are provided by residues isoleucine 195 and 200 to 202 (GDA). Residue aspartate 201 participates in 5-phospho-alpha-D-ribose 1-diphosphate binding.

This sequence belongs to the UPRTase family. Mg(2+) serves as cofactor.

It carries out the reaction UMP + diphosphate = 5-phospho-alpha-D-ribose 1-diphosphate + uracil. The protein operates within pyrimidine metabolism; UMP biosynthesis via salvage pathway; UMP from uracil: step 1/1. With respect to regulation, allosterically activated by GTP. Its function is as follows. Catalyzes the conversion of uracil and 5-phospho-alpha-D-ribose 1-diphosphate (PRPP) to UMP and diphosphate. The sequence is that of Uracil phosphoribosyltransferase from Streptomyces griseus subsp. griseus (strain JCM 4626 / CBS 651.72 / NBRC 13350 / KCC S-0626 / ISP 5235).